The chain runs to 348 residues: D-alanine--D-alanine ligase (348 aa).

The ATP-grasp domain occupies 132–334 (KRVLESAGIP…YAELIEELVR (203 aa)). Residue 162 to 217 (EAALSYPVFVKPANMGSSVGISKAESEEELRAAILLALTYDSRILIEQGVLAREIE) coordinates ATP. Positions 288, 301, and 303 each coordinate Mg(2+).

This sequence belongs to the D-alanine--D-alanine ligase family. It depends on Mg(2+) as a cofactor. Mn(2+) serves as cofactor.

It is found in the cytoplasm. The enzyme catalyses 2 D-alanine + ATP = D-alanyl-D-alanine + ADP + phosphate + H(+). Its pathway is cell wall biogenesis; peptidoglycan biosynthesis. In terms of biological role, cell wall formation. The protein is D-alanine--D-alanine ligase of Streptococcus equi subsp. zooepidemicus (strain H70).